Here is a 390-residue protein sequence, read N- to C-terminus: Protein shisa-9 (390 aa).

The first 22 residues, 1 to 22, serve as a signal peptide directing secretion; the sequence is MTGIRAIFYYFLVDLLTLLCWA. Residues 23 to 134 lie on the Extracellular side of the membrane; sequence QGKGGQHFGS…DPSHDPTRDK (112 aa). 2 N-linked (GlcNAc...) asparagine glycosylation sites follow: asparagine 40 and asparagine 74. Residues 135–155 traverse the membrane as a helical segment; sequence TNLIVYIICGVVAVMVLVGIF. At 156–390 the chain is on the cytoplasmic side; the sequence is TKLGLEKAHR…VTNSKTEVTV (235 aa).

This sequence belongs to the shisa family. SHISA9 subfamily. As to quaternary structure, component of some AMPA receptors (ionotropic glutamate receptors) complex.

It localises to the cell projection. It is found in the dendritic spine membrane. The protein localises to the synapse. Regulator of short-term neuronal synaptic plasticity in the dentate gyrus. Associates with AMPA receptors (ionotropic glutamate receptors) in synaptic spines and promotes AMPA receptor desensitization at excitatory synapses. In Xenopus tropicalis (Western clawed frog), this protein is Protein shisa-9 (shisa9).